Here is a 379-residue protein sequence, read N- to C-terminus: MKILRKNHPLLKIVNHSFIDLPTPSNISSWWNFGSLLGMCLVIQILTGLFLAMHYTSDTTTAFSSVAHICRDVNYGWLIRYLHANGASMFFICLFIHVGRGIYYGSYVLLETWNIGIILLLTTMATAFVGYVLPWGQMSFWGATVITNLLSAIPYIGNTLVEWIWGGFSVDKATLTRFFAFHFILPFIIAAFALVHLLFLHETGSNNPSGLNSDSDKIPFHPYYTTKDLLGIFLLLLVLMILALFFPNVLGDPDNFTPANPLNTPAHIKPEWYFLFAYAILRSIPNKLGGVLALVLSILILATFPLLNTSKQHGLIFRPVTQVIYWIFIANLLVLTWIGGQPVEYPFTTIGQIASITYFAIIIILIPVSNTIENNIIKL.

Transmembrane regions (helical) follow at residues F33 to M53, W77 to V98, W113 to L133, and F178 to L198. Positions 83 and 97 each coordinate heme b. Residues H182 and H196 each coordinate heme b. H201 lines the a ubiquinone pocket. Transmembrane regions (helical) follow at residues T226–F246, L288–N308, V320–G340, and F347–P367.

It belongs to the cytochrome b family. As to quaternary structure, the cytochrome bc1 complex contains 11 subunits: 3 respiratory subunits (MT-CYB, CYC1 and UQCRFS1), 2 core proteins (UQCRC1 and UQCRC2) and 6 low-molecular weight proteins (UQCRH/QCR6, UQCRB/QCR7, UQCRQ/QCR8, UQCR10/QCR9, UQCR11/QCR10 and a cleavage product of UQCRFS1). This cytochrome bc1 complex then forms a dimer. Requires heme b as cofactor.

It localises to the mitochondrion inner membrane. In terms of biological role, component of the ubiquinol-cytochrome c reductase complex (complex III or cytochrome b-c1 complex) that is part of the mitochondrial respiratory chain. The b-c1 complex mediates electron transfer from ubiquinol to cytochrome c. Contributes to the generation of a proton gradient across the mitochondrial membrane that is then used for ATP synthesis. The polypeptide is Cytochrome b (MT-CYB) (Akodon paranaensis (Parana grass mouse)).